We begin with the raw amino-acid sequence, 516 residues long: MNVFFMFSLLFLAALGSCAHDRNPLEECFRETDYEEFLEIARNGLTVTSNPKHVVIVGAGMAGLSAAYVLAGAGHQVTVLEASERVGGRVRTYRKKDWYANLGPMRLPTKHRIVREYIRKFGLQLNEFFQENENAWYFIKNIRKRVREVKNNPGILEYPVKPSEEGKSAAQLYVESLRKVVKELKRTNCKYILDKYDTYSTKEYLLKEGNLSPGAVDMIGDLLNEDSGYYVSFIESLKHDDIFGYEKRFDEIVGGMDQLPTSMYEAIKEKVQVHFNARVIEIQQNDRETKVTYQTSANEMSSVTADYVIVCTTSRAARRIKFEPPLPPKKAHALRSVHYRSGTKIFLTCKRKFWEDDGIRGGKSTTDLPSRFIYYPNHNFTSGVGVIIAYGIGDDANFFQALDFKDCADIVINDLSLIHQLPKEDIQTFCRPSMIQRWSLDKYAMGGITTFTPYQFQHFSEALTAPFKRIYFAGEYTAQFHGWIDSTIKSGLTAARDVNRASENPSGIHLSNDNEF.

A signal peptide spans 1 to 18; sequence MNVFFMFSLLFLAALGSC. The cysteines at positions 28 and 189 are disulfide-linked. FAD contacts are provided by residues 61–62, 81–82, Arg89, and 103–106; these read MA, EA, and GPMR. Substrate is bound by residues Arg106 and His239. Val279 contributes to the FAD binding site. Cys349 and Cys430 are joined by a disulfide. A glycan (N-linked (GlcNAc...) asparagine) is linked at Asn379. A substrate-binding site is contributed by Tyr390. FAD contacts are provided by residues Glu475 and 482–487; that span reads GWIDST. Substrate is bound at residue 482–483; the sequence is GW.

Homodimer; non-covalently linked. It depends on FAD as a cofactor. Post-translationally, N-glycosylated. N-glycan probably consists of the disaccharide N-acetylglucosamine-fucose (HexNAc-Fuc). Expressed by the venom gland.

It is found in the secreted. It catalyses the reaction an L-alpha-amino acid + O2 + H2O = a 2-oxocarboxylate + H2O2 + NH4(+). The catalysed reaction is L-leucine + O2 + H2O = 4-methyl-2-oxopentanoate + H2O2 + NH4(+). The enzyme catalyses L-phenylalanine + O2 + H2O = 3-phenylpyruvate + H2O2 + NH4(+). It carries out the reaction L-tryptophan + O2 + H2O = indole-3-pyruvate + H2O2 + NH4(+). It catalyses the reaction L-methionine + O2 + H2O = 4-methylsulfanyl-2-oxobutanoate + H2O2 + NH4(+). The catalysed reaction is L-isoleucine + O2 + H2O = (S)-3-methyl-2-oxopentanoate + H2O2 + NH4(+). The enzyme catalyses L-arginine + O2 + H2O = 5-guanidino-2-oxopentanoate + H2O2 + NH4(+). It carries out the reaction L-histidine + O2 + H2O = 3-(imidazol-5-yl)pyruvate + H2O2 + NH4(+). Its function is as follows. Catalyzes an oxidative deamination of predominantly hydrophobic and aromatic L-amino acids, thus producing hydrogen peroxide that may contribute to the diverse toxic effects of this enzyme. Is highly active on L-Met, L-Leu, L-Trp, and L-Phe, moderately active on L-Ile, L-His, and L-Arg, and weakly or not active on L-Gln, L-Val, L-Asn, L-Ala, L-Lys, L-Ser, L-Thr, L-Pro, L-Asp, L-Gly, L-Tyr, L-Cys and L-Glu. This enzyme exhibits diverse biological activities, such as hemorrhage, hemolysis, edema, apoptosis of vascular endothelial cells or tumor cell lines, antibacterial and antiparasitic activities, as well as regulation of platelet aggregation. Its effect on platelets is controversial, since it either induces aggregation or inhibits agonist-induced aggregation. These different effects are probably due to different experimental conditions. In vitro, the enzyme exhibits cytotoxicity against fibroblast cell line and kills Leishmania amazonensis promastigotes, intensified by substrate addition. This is L-amino acid oxidase bordonein-L from Crotalus durissus terrificus (South American rattlesnake).